Here is a 180-residue protein sequence, read N- to C-terminus: Ribosome maturation factor RimM (180 aa).

A PRC barrel domain is found at 104-177; it reads PEEFHDHQLV…RVVVDPPGGL (74 aa).

This sequence belongs to the RimM family. In terms of assembly, binds ribosomal protein uS19.

It localises to the cytoplasm. In terms of biological role, an accessory protein needed during the final step in the assembly of 30S ribosomal subunit, possibly for assembly of the head region. Essential for efficient processing of 16S rRNA. May be needed both before and after RbfA during the maturation of 16S rRNA. It has affinity for free ribosomal 30S subunits but not for 70S ribosomes. The sequence is that of Ribosome maturation factor RimM from Salinispora tropica (strain ATCC BAA-916 / DSM 44818 / JCM 13857 / NBRC 105044 / CNB-440).